The primary structure comprises 374 residues: Multicilin (374 aa).

Residues 164 to 212 (EQYWRDVADHNQKALGDALVENNQLQVSLTEKQEEIVSLKEKNIQLNEL) are a coiled coil. A disordered region spans residues 230–260 (RTKQNSGATQGRLPVKRSLEDFYPQSNEPDS). Residues 330–374 (TDLEDVSFRTSIKEHSTIRTLAFPQGNAFTIRTSGGGYKFRWVPN) are TIRT domain.

It belongs to the geminin family. In terms of assembly, component of the EDM complex, at least composed of e2f4, e2f5, mcidas and tfdp1. Expressed in multiciliate differentiating cells. Expression is lost by stage 26, when multiciliate cells in the skin are fully differentiated, but is then detected in the developing nephrostomes of the kidneys where multiciliate cells form at later stages.

It localises to the nucleus. Functionally, transcription regulator specifically required for multiciliate cell differentiation. Acts in a multiprotein complex containing E2F4 and E2F5 that binds and activates genes required for centriole biogenesis. Activates genes required for centriole assembly (plk4, cep152) and genes specifically required for motile cilia formation (foxj1). Also promotes the deuterosome pathway of centriole biogenesis by activating expression of ccdc67/deup1, but not its paralog cep63. The protein is Multicilin (mcidas) of Xenopus laevis (African clawed frog).